The primary structure comprises 729 residues: Leucine-rich repeat flightless-interacting protein 1 (729 aa).

The residue at position 2 (Thr2) is an N-acetylthreonine. Ser16 is subject to Phosphoserine. The segment covering 40–65 (IRMKELERQQKEVEERPDKDFAEKGS) has biased composition (basic and acidic residues). Residues 40-98 (IRMKELERQQKEVEERPDKDFAEKGSRNMPSLSAATLASLGGTSSRRGSGDTSISMDTE) form a disordered region. Residues 78 to 94 (SLGGTSSRRGSGDTSIS) show a composition bias toward low complexity. A phosphoserine mark is found at Ser83, Ser84, Ser88, Asp90, Ser92, and Thr97. Residues 94-194 (SMDTEASIRE…LRQREEMLEK (101 aa)) are a coiled coil. Residue Lys249 forms a Glycyl lysine isopeptide (Lys-Gly) (interchain with G-Cter in SUMO1) linkage. The segment at 253 to 729 (VEKVGQRETL…SKSKEDCTMS (477 aa)) is disordered. A compositionally biased stretch (polar residues) spans 260-272 (ETLQNSEQEQPKP). Residues 277-297 (DCVDRGVSHPGEKAENQRPAE) show a composition bias toward basic and acidic residues. Ser302 is subject to Phosphoserine. Positions 313–326 (QQVQSQDQENTSDL) are enriched in polar residues. Residues 327–343 (KNSEQIESHKVTNKSDS) show a composition bias toward basic and acidic residues. A compositionally biased stretch (polar residues) spans 344 to 354 (RASNSPEQSSC). 2 positions are modified to phosphoserine: Ser346 and Ser348. Basic and acidic residues-rich tracts occupy residues 435–445 (KGTENHGESCL) and 482–494 (KADD…EKPI). A DNA-binding region spans residues 465–567 (EEAIVQIPQA…KNKKKKAATP (103 aa)). Positions 506–523 (INQSGHQDTTGPGSTDAQ) are enriched in polar residues. Phosphoserine is present on residues Ser538 and Ser547. The span at 550-564 (KKTKNKKKKNKKKKA) shows a compositional bias: basic residues. Residues 608–618 (QKIRAGSREPV) are compositionally biased toward basic and acidic residues. A phosphoserine mark is found at Ser614 and Ser670. Composition is skewed to polar residues over residues 667–684 (CDTS…SQHG) and 693–710 (LDNS…SESG). Positions 713 to 729 (AREEVGNSKSKEDCTMS) are enriched in basic and acidic residues.

The protein belongs to the LRRFIP family. Homodimer. May also form higher oligomers. Interacts with FLII. Interacts with MYD88. Competes with FLII for MyD88-binding, even in the absence of LPS. In terms of tissue distribution, ubiquitously expressed.

Its subcellular location is the nucleus. It is found in the cytoplasm. Its function is as follows. Transcriptional repressor which preferentially binds to the GC-rich consensus sequence (5'-AGCCCCCGGCG-3') and may regulate expression of TNF, EGFR and PDGFA. May control smooth muscle cells proliferation following artery injury through PDGFA repression. May also bind double-stranded RNA. Positively regulates Toll-like receptor (TLR) signaling in response to agonist probably by competing with the negative FLII regulator for MYD88-binding. This is Leucine-rich repeat flightless-interacting protein 1 (Lrrfip1) from Mus musculus (Mouse).